The sequence spans 131 residues: Large ribosomal subunit protein eL32 (131 aa).

The protein belongs to the eukaryotic ribosomal protein eL32 family. As to quaternary structure, component of the large ribosomal subunit. Mature ribosomes consist of a small (40S) and a large (60S) subunit. The 40S subunit contains about 32 different proteins and 1 molecule of RNA (18S). The 60S subunit contains 45 different proteins and 3 molecules of RNA (25S, 5.8S and 5S).

It is found in the cytoplasm. Component of the ribosome, a large ribonucleoprotein complex responsible for the synthesis of proteins in the cell. The small ribosomal subunit (SSU) binds messenger RNAs (mRNAs) and translates the encoded message by selecting cognate aminoacyl-transfer RNA (tRNA) molecules. The large subunit (LSU) contains the ribosomal catalytic site termed the peptidyl transferase center (PTC), which catalyzes the formation of peptide bonds, thereby polymerizing the amino acids delivered by tRNAs into a polypeptide chain. The nascent polypeptides leave the ribosome through a tunnel in the LSU and interact with protein factors that function in enzymatic processing, targeting, and the membrane insertion of nascent chains at the exit of the ribosomal tunnel. This chain is Large ribosomal subunit protein eL32, found in Candida albicans (strain SC5314 / ATCC MYA-2876) (Yeast).